The primary structure comprises 169 residues: MRGSLAIYNALKDSNIDFICSVPCANLKNLLKLIEEDKNIINIPATREEEAFGICAGAYLAGKKTAILMQNSGIGNSINAIASLYKTFQIPTLLIISHRGDLKEQIPAQIPMGRWIEKLLDVCEIPTYKPKTPEEAYKLIKYASSYMYKISYPVALLFDALYWEYDLEK.

The protein belongs to the ComD family. Heterododecamer composed of 6 subunits alpha and 6 subunits beta.

It carries out the reaction 3-sulfopyruvate + H(+) = sulfoacetaldehyde + CO2. Its pathway is cofactor biosynthesis; coenzyme M biosynthesis; sulfoacetaldehyde from phosphoenolpyruvate and sulfite: step 4/4. Inhibited by oxygen when heated in air at 80 degrees Celsius. The enzyme is reactivated by addition of dithionite. In terms of biological role, involved in the biosynthesis of the coenzyme M (2-mercaptoethanesulfonic acid). Catalyzes the decarboxylation of sulfopyruvate to sulfoacetaldehyde. The sequence is that of Sulfopyruvate decarboxylase subunit alpha from Methanocaldococcus jannaschii (strain ATCC 43067 / DSM 2661 / JAL-1 / JCM 10045 / NBRC 100440) (Methanococcus jannaschii).